Consider the following 580-residue polypeptide: Malto-oligosyltrehalose trehalohydrolase (580 aa).

The disordered stretch occupies residues 56-88 (LPDPRSARQPDGVHARSQRWEPPGQFGAARTDT). A compositionally biased stretch (basic and acidic residues) spans 60 to 69 (RSARQPDGVH). 245-250 (RLDAVH) contributes to the substrate binding site. The active-site Nucleophile is aspartate 247. Glutamate 284 serves as the catalytic Proton donor. Residues 309–313 (DDIHH) and 379–384 (HDQVGN) each bind substrate.

It belongs to the glycosyl hydrolase 13 family.

The protein resides in the cytoplasm. The catalysed reaction is hydrolysis of (1-&gt;4)-alpha-D-glucosidic linkage in 4-alpha-D-[(1-&gt;4)-alpha-D-glucanosyl]n trehalose to yield trehalose and (1-&gt;4)-alpha-D-glucan.. It participates in glycan biosynthesis; trehalose biosynthesis. In terms of biological role, is involved in the biosynthesis of trehalose but not in that of capsular glucan and glycogen. The polypeptide is Malto-oligosyltrehalose trehalohydrolase (treZ) (Mycobacterium tuberculosis (strain CDC 1551 / Oshkosh)).